Reading from the N-terminus, the 284-residue chain is Bifunctional protein FolD (284 aa).

Residues 166 to 168 and Ser-191 contribute to the NADP(+) site; that span reads GRS.

Belongs to the tetrahydrofolate dehydrogenase/cyclohydrolase family. As to quaternary structure, homodimer.

The catalysed reaction is (6R)-5,10-methylene-5,6,7,8-tetrahydrofolate + NADP(+) = (6R)-5,10-methenyltetrahydrofolate + NADPH. The enzyme catalyses (6R)-5,10-methenyltetrahydrofolate + H2O = (6R)-10-formyltetrahydrofolate + H(+). It participates in one-carbon metabolism; tetrahydrofolate interconversion. In terms of biological role, catalyzes the oxidation of 5,10-methylenetetrahydrofolate to 5,10-methenyltetrahydrofolate and then the hydrolysis of 5,10-methenyltetrahydrofolate to 10-formyltetrahydrofolate. The polypeptide is Bifunctional protein FolD (Leptospira interrogans serogroup Icterohaemorrhagiae serovar copenhageni (strain Fiocruz L1-130)).